The sequence spans 504 residues: Maturase K (504 aa).

It belongs to the intron maturase 2 family. MatK subfamily.

It is found in the plastid. Its subcellular location is the chloroplast. Usually encoded in the trnK tRNA gene intron. Probably assists in splicing its own and other chloroplast group II introns. This chain is Maturase K, found in Aruncus dioicus (Goat's beard).